The chain runs to 173 residues: U1 small nuclear ribonucleoprotein C (173 aa).

A Matrin-type zinc finger spans residues 4-36 (YYCDYCDTYLTHDSPSVRKTHCQGRKHKDNVKF). The tract at residues 72 to 100 (AAIPPPANMQGPPRPVPPGPMGPGPNMLG) is disordered. The segment covering 73–94 (AIPPPANMQGPPRPVPPGPMGP) has biased composition (pro residues).

The protein belongs to the U1 small nuclear ribonucleoprotein C family. In terms of assembly, U1 snRNP is composed of the 7 core Sm proteins B/B', D1, D2, D3, E, F and G that assemble in a heptameric protein ring on the Sm site of the small nuclear RNA to form the core snRNP, and at least 3 U1 snRNP-specific proteins U1-70K, U1-A and U1-C. U1-C interacts with U1 snRNA and the 5' splice-site region of the pre-mRNA.

Its subcellular location is the nucleus. Its function is as follows. Component of the spliceosomal U1 snRNP, which is essential for recognition of the pre-mRNA 5' splice-site and the subsequent assembly of the spliceosome. U1-C is directly involved in initial 5' splice-site recognition for both constitutive and regulated alternative splicing. The interaction with the 5' splice-site seems to precede base-pairing between the pre-mRNA and the U1 snRNA. Stimulates commitment or early (E) complex formation by stabilizing the base pairing of the 5' end of the U1 snRNA and the 5' splice-site region. This Pediculus humanus subsp. corporis (Body louse) protein is U1 small nuclear ribonucleoprotein C.